We begin with the raw amino-acid sequence, 170 residues long: Adenine phosphoribosyltransferase (170 aa).

The protein belongs to the purine/pyrimidine phosphoribosyltransferase family. Homodimer.

The protein localises to the cytoplasm. The catalysed reaction is AMP + diphosphate = 5-phospho-alpha-D-ribose 1-diphosphate + adenine. The protein operates within purine metabolism; AMP biosynthesis via salvage pathway; AMP from adenine: step 1/1. Catalyzes a salvage reaction resulting in the formation of AMP, that is energically less costly than de novo synthesis. This Streptococcus suis (strain 98HAH33) protein is Adenine phosphoribosyltransferase.